The chain runs to 541 residues: Testis-specific chromodomain protein Y 2 (541 aa).

The Chromo domain maps to 6 to 66 (FEVEAIVDKR…RQTEKQKKLT (61 aa)). The disordered stretch occupies residues 72–104 (RIFSNNARRRTSRSTKANYSKNSPKTPVTDKHH). Positions 87–97 (KANYSKNSPKT) are enriched in polar residues.

As to expression, testis specific.

Its subcellular location is the nucleus. The enzyme catalyses L-lysyl-[protein] + acetyl-CoA = N(6)-acetyl-L-lysyl-[protein] + CoA + H(+). May have histone acetyltransferase activity. The chain is Testis-specific chromodomain protein Y 2 (CDY2A) from Homo sapiens (Human).